Here is a 286-residue protein sequence, read N- to C-terminus: ATP phosphoribosyltransferase (286 aa).

Belongs to the ATP phosphoribosyltransferase family. Long subfamily. The cofactor is Mg(2+).

It localises to the cytoplasm. The enzyme catalyses 1-(5-phospho-beta-D-ribosyl)-ATP + diphosphate = 5-phospho-alpha-D-ribose 1-diphosphate + ATP. It participates in amino-acid biosynthesis; L-histidine biosynthesis; L-histidine from 5-phospho-alpha-D-ribose 1-diphosphate: step 1/9. Its activity is regulated as follows. Feedback inhibited by histidine. Catalyzes the condensation of ATP and 5-phosphoribose 1-diphosphate to form N'-(5'-phosphoribosyl)-ATP (PR-ATP). Has a crucial role in the pathway because the rate of histidine biosynthesis seems to be controlled primarily by regulation of HisG enzymatic activity. The sequence is that of ATP phosphoribosyltransferase from Arthrobacter sp. (strain FB24).